Reading from the N-terminus, the 140-residue chain is Large ribosomal subunit protein uL14 (140 aa).

This sequence belongs to the universal ribosomal protein uL14 family. Component of the large ribosomal subunit.

Its subcellular location is the cytoplasm. In terms of biological role, component of the large ribosomal subunit. The ribosome is a large ribonucleoprotein complex responsible for the synthesis of proteins in the cell. This is Large ribosomal subunit protein uL14 (rpl23) from Ictalurus punctatus (Channel catfish).